A 504-amino-acid chain; its full sequence is Maturase K (504 aa).

Belongs to the intron maturase 2 family. MatK subfamily.

It is found in the plastid. Its subcellular location is the chloroplast. Functionally, usually encoded in the trnK tRNA gene intron. Probably assists in splicing its own and other chloroplast group II introns. This chain is Maturase K, found in Aruncus dioicus (Goat's beard).